A 342-amino-acid polypeptide reads, in one-letter code: MPWPPVFGKVFMSPLQDGFSRRFYYLRLSITDVCNFRCTYCLPDGYRPPAGGKVGRQPFLSLEEIRRVVSGFAAMGTRKVRLTGGEPSLRRDFTAIIETVANTPGIEKVAMTTNGYRLKERAREWFDAGLTALNVSVDSLDPRQFHQITGENKLAEVMDGIEAALAAGFKSVKINAVLLKGLNDHQLDAFLAWIRHKPIELRFIELMQTGEMDTLFRDHHASGALIKQRLLDAGWLQQLRGADDGPAQVFMHPESMGGVGLIMPYSKDFCAGCNRLRVSSLGKLHLCLFGDHGVELRDLLTADGQQDELQQRIRSALVGKAATHRLHEGNAGMTPHLASIGG.

Residues 18–247 form the Radical SAM core domain; that stretch reads GFSRRFYYLR…QLRGADDGPA (230 aa). Arginine 27 contacts GTP. 2 residues coordinate [4Fe-4S] cluster: cysteine 34 and cysteine 38. Tyrosine 40 contacts S-adenosyl-L-methionine. Cysteine 41 contributes to the [4Fe-4S] cluster binding site. Arginine 81 is a GTP binding site. Glycine 85 is a binding site for S-adenosyl-L-methionine. Position 112 (threonine 112) interacts with GTP. Serine 136 contacts S-adenosyl-L-methionine. Lysine 173 serves as a coordination point for GTP. Methionine 207 is a binding site for S-adenosyl-L-methionine. [4Fe-4S] cluster contacts are provided by cysteine 270 and cysteine 273. 275–277 contributes to the GTP binding site; it reads RLR. Cysteine 287 is a [4Fe-4S] cluster binding site.

The protein belongs to the radical SAM superfamily. MoaA family. Monomer and homodimer. The cofactor is [4Fe-4S] cluster.

The catalysed reaction is GTP + AH2 + S-adenosyl-L-methionine = (8S)-3',8-cyclo-7,8-dihydroguanosine 5'-triphosphate + 5'-deoxyadenosine + L-methionine + A + H(+). It functions in the pathway cofactor biosynthesis; molybdopterin biosynthesis. Catalyzes the cyclization of GTP to (8S)-3',8-cyclo-7,8-dihydroguanosine 5'-triphosphate. This is GTP 3',8-cyclase from Aeromonas hydrophila subsp. hydrophila (strain ATCC 7966 / DSM 30187 / BCRC 13018 / CCUG 14551 / JCM 1027 / KCTC 2358 / NCIMB 9240 / NCTC 8049).